A 217-amino-acid polypeptide reads, in one-letter code: Probable transaldolase (217 aa).

K83 functions as the Schiff-base intermediate with substrate in the catalytic mechanism.

Belongs to the transaldolase family. Type 3B subfamily.

It localises to the cytoplasm. The enzyme catalyses D-sedoheptulose 7-phosphate + D-glyceraldehyde 3-phosphate = D-erythrose 4-phosphate + beta-D-fructose 6-phosphate. The protein operates within carbohydrate degradation; pentose phosphate pathway; D-glyceraldehyde 3-phosphate and beta-D-fructose 6-phosphate from D-ribose 5-phosphate and D-xylulose 5-phosphate (non-oxidative stage): step 2/3. In terms of biological role, transaldolase is important for the balance of metabolites in the pentose-phosphate pathway. The chain is Probable transaldolase from Anaeromyxobacter dehalogenans (strain 2CP-C).